The sequence spans 207 residues: MLHTPSIKQASLLWDVAGLVAGVDEAGRGPLAGPVVAAAVILDDLQPIKGLADSKILSARRREQLFDEIRAKALCCCIAQASVEEIERLNILQATLLAMRRAVEGLRLKPALVLVDGNRLPVLTMRAEAIVKGDALVAAISAASILAKVHRDRWCAEVDVQYPQYGFARHKGYGTVQHLAALTKHGACPQHRKTFGPVAEVLREALP.

In terms of domain architecture, RNase H type-2 spans 18–207 (GLVAGVDEAG…VAEVLREALP (190 aa)). A divalent metal cation is bound by residues aspartate 24, glutamate 25, and aspartate 116.

Belongs to the RNase HII family. It depends on Mn(2+) as a cofactor. Requires Mg(2+) as cofactor.

It localises to the cytoplasm. The catalysed reaction is Endonucleolytic cleavage to 5'-phosphomonoester.. In terms of biological role, endonuclease that specifically degrades the RNA of RNA-DNA hybrids. This Albidiferax ferrireducens (strain ATCC BAA-621 / DSM 15236 / T118) (Rhodoferax ferrireducens) protein is Ribonuclease HII.